A 460-amino-acid polypeptide reads, in one-letter code: Lipase member I (460 aa).

Positions 1 to 15 (MRVYIFLCLMCWVRS) are cleaved as a signal peptide. The N-linked (GlcNAc...) asparagine glycan is linked to Asn63. Ser159 (nucleophile) is an active-site residue. Asp183 serves as the catalytic Charge relay system. Cys238 and Cys251 are oxidised to a cystine. His253 acts as the Charge relay system in catalysis. Cystine bridges form between Cys275/Cys286 and Cys289/Cys297. Asn396 is a glycosylation site (N-linked (GlcNAc...) asparagine). Residues Cys436 and Cys455 are joined by a disulfide bond.

This sequence belongs to the AB hydrolase superfamily. Lipase family. As to quaternary structure, interacts with heparin with a high affinity. In terms of tissue distribution, expressed in testis. Expressed exclusively at the connecting piece of the sperm.

It is found in the cell membrane. It localises to the secreted. It carries out the reaction 1-hexadecanoyl-2-(9Z-octadecenoyl)-sn-glycero-3-phosphate + H2O = 2-(9Z-octadecenoyl)-sn-glycero-3-phosphate + hexadecanoate + H(+). Its activity is regulated as follows. Inhibited by sodium vanadate. In terms of biological role, hydrolyzes specifically phosphatidic acid (PA) to produce 2-acyl lysophosphatidic acid (LPA; a potent bioactive lipid mediator) and fatty acid. Does not hydrolyze other phospholipids, like phosphatidylserine (PS), phosphatidylcholine (PC) and phosphatidylethanolamine (PE) or triacylglycerol (TG). This is Lipase member I (LIPI) from Homo sapiens (Human).